We begin with the raw amino-acid sequence, 246 residues long: Probable transcriptional regulatory protein APP7_1210 (246 aa).

Belongs to the TACO1 family.

Its subcellular location is the cytoplasm. This chain is Probable transcriptional regulatory protein APP7_1210, found in Actinobacillus pleuropneumoniae serotype 7 (strain AP76).